The primary structure comprises 420 residues: E3 ubiquitin-protein ligase pellino homolog 2 (420 aa).

In terms of domain architecture, FHA; atypical spans 15–202 (EPVKYGELVV…MHPRGGFTEE (188 aa)).

It belongs to the pellino family. In terms of assembly, interacts with TRAF6, IRAK1, IRAK4 and MAP3K7. Interacts with BCL10; this interaction is impaired by SOCS3. Post-translationally, phosphorylated by IRAK1 and IRAK4 enhancing its E3 ligase activity.

The enzyme catalyses S-ubiquitinyl-[E2 ubiquitin-conjugating enzyme]-L-cysteine + [acceptor protein]-L-lysine = [E2 ubiquitin-conjugating enzyme]-L-cysteine + N(6)-ubiquitinyl-[acceptor protein]-L-lysine.. It participates in protein modification; protein ubiquitination. E3 ubiquitin ligase catalyzing the covalent attachment of ubiquitin moieties onto substrate proteins. Involved in the TLR and IL-1 signaling pathways via interaction with the complex containing IRAK kinases and TRAF6. Mediates IL1B-induced IRAK1 'Lys-63'-linked polyubiquitination and possibly 'Lys-48'-linked ubiquitination. May be important for LPS- and IL1B-induced MAP3K7-dependent, but not MAP3K3-dependent, NF-kappa-B activation. Can activate the MAP (mitogen activated protein) kinase pathway leading to activation of ELK1. The sequence is that of E3 ubiquitin-protein ligase pellino homolog 2 (PELI2) from Homo sapiens (Human).